A 38-amino-acid polypeptide reads, in one-letter code: Potassium channel toxin alpha-KTx 3.7 (38 aa).

Cystine bridges form between Cys8/Cys28, Cys14/Cys33, and Cys18/Cys35.

It belongs to the short scorpion toxin superfamily. Potassium channel inhibitor family. Alpha-KTx 03 subfamily. As to expression, expressed by the venom gland.

It is found in the secreted. Blocks voltage-gated potassium channels Kv1.1/KCNA1 (IC(50)=0.6 nM), Kv1.2/KCNA2 (IC(50)=5.4 nM), Kv1.3/KCNA3 (IC(50)=0.014 nM) potently, and moderately block intermediate conductance calcium-activated potassium channels KCa3.1/KCNN4 (IC(50)=225 nM). Also shows activity on muscle-type nicotinic acetylcholine receptor (nAChR), since it reversibly and dose-dependently inhibits acetylcholine-induced current through mouse muscle-type nAChR heterologously expressed in Xenopus oocytes (IC(50)=1.6 uM). This chain is Potassium channel toxin alpha-KTx 3.7, found in Orthochirus scrobiculosus (Central Asian scorpion).